A 444-amino-acid chain; its full sequence is MTRKYFGTDGIRGTVGQSPITPDFALRLAHAVGRVLRRTQERPTVLIGKDTRISGYMLESALESGFNSAGVDVVLLGPLPTPGVAYLTRAQRASLGVVISASHNPYPDNGIKFFSAQGTKLPDAWEEEVEAALEQPPVWADSASLGKTRRLDDAAGRYIEFCKSTFANDLTLRGLKIVVDAAHGAAYHIAPKVFHELGAEVMAIGCAPDGLNINHQVGATHPDALVRAVRANHADYGIALDGDADRVQMVDAAGRLFNGDELLYVMVAARLARDEHVPGVVGTLMTNMAVEEALQRRGVKFMRAKVGDRYVLEELQRQHWLLGGEGSGHLLALDRHTTGDGLISALQVLQACVRSGKTLAQLLADVPLFPQVLLNVRLNPGQDWKTNPVLADAIRDAEAELGAHGRVLVRASGTEPLLRVMVEAREAEQANRCAQRMADAARAG.

The Phosphoserine intermediate role is filled by Ser-102. Positions 102, 241, 243, and 245 each coordinate Mg(2+). Ser-102 is subject to Phosphoserine.

This sequence belongs to the phosphohexose mutase family. Mg(2+) is required as a cofactor. Post-translationally, activated by phosphorylation.

It carries out the reaction alpha-D-glucosamine 1-phosphate = D-glucosamine 6-phosphate. Its function is as follows. Catalyzes the conversion of glucosamine-6-phosphate to glucosamine-1-phosphate. This Acidovorax sp. (strain JS42) protein is Phosphoglucosamine mutase.